A 370-amino-acid chain; its full sequence is Cobalt-precorrin-5B C(1)-methyltransferase (370 aa).

Belongs to the CbiD family.

The enzyme catalyses Co-precorrin-5B + S-adenosyl-L-methionine = Co-precorrin-6A + S-adenosyl-L-homocysteine. It participates in cofactor biosynthesis; adenosylcobalamin biosynthesis; cob(II)yrinate a,c-diamide from sirohydrochlorin (anaerobic route): step 6/10. In terms of biological role, catalyzes the methylation of C-1 in cobalt-precorrin-5B to form cobalt-precorrin-6A. This chain is Cobalt-precorrin-5B C(1)-methyltransferase, found in Trichormus variabilis (strain ATCC 29413 / PCC 7937) (Anabaena variabilis).